A 124-amino-acid chain; its full sequence is 5-hydroxyisourate hydrolase (124 aa).

Substrate is bound by residues His-15, Arg-53, and Tyr-121.

This sequence belongs to the transthyretin family. 5-hydroxyisourate hydrolase subfamily. Homotetramer.

The catalysed reaction is 5-hydroxyisourate + H2O = 5-hydroxy-2-oxo-4-ureido-2,5-dihydro-1H-imidazole-5-carboxylate + H(+). Catalyzes the hydrolysis of 5-hydroxyisourate (HIU) to 2-oxo-4-hydroxy-4-carboxy-5-ureidoimidazoline (OHCU). The sequence is that of 5-hydroxyisourate hydrolase from Mesorhizobium japonicum (strain LMG 29417 / CECT 9101 / MAFF 303099) (Mesorhizobium loti (strain MAFF 303099)).